We begin with the raw amino-acid sequence, 538 residues long: Putative cysteine ligase BshC (538 aa).

A coiled-coil region spans residues 248–268 (ISKYKEVQEGLRNQQEVIKEL).

This sequence belongs to the BshC family.

Its function is as follows. Involved in bacillithiol (BSH) biosynthesis. May catalyze the last step of the pathway, the addition of cysteine to glucosamine malate (GlcN-Mal) to generate BSH. The chain is Putative cysteine ligase BshC from Bacillus cereus (strain B4264).